The primary structure comprises 257 residues: Snake venom serine protease salmonase (257 aa).

The N-terminal stretch at 1–18 is a signal peptide; the sequence is MVLIRVLVNFLILQLSYA. A propeptide spanning residues 19–24 is cleaved from the precursor; it reads QKSSEL. Residues 25–248 form the Peptidase S1 domain; that stretch reads VIGGDECNIN…YIDWIQSIIA (224 aa). 5 disulfide bridges follow: cysteine 31–cysteine 162, cysteine 49–cysteine 65, cysteine 141–cysteine 209, cysteine 173–cysteine 188, and cysteine 199–cysteine 224. Catalysis depends on histidine 64, which acts as the Charge relay system. N-linked (GlcNAc...) asparagine glycosylation is present at asparagine 78. The active-site Charge relay system is the aspartate 109. Residue serine 203 is the Charge relay system of the active site.

It belongs to the peptidase S1 family. Snake venom subfamily. As to quaternary structure, monomer. Expressed by the venom gland.

It is found in the secreted. Functionally, snake venom serine protease that may act in the hemostasis system of the prey. This Gloydius brevicauda (Korean slamosa snake) protein is Snake venom serine protease salmonase.